The primary structure comprises 217 residues: Growth hormone variant (217 aa).

Positions methionine 1 to alanine 26 are cleaved as a signal peptide. 2 cysteine pairs are disulfide-bonded: cysteine 79–cysteine 191 and cysteine 208–cysteine 215. Serine 132 is modified (phosphoserine). Residue asparagine 166 is glycosylated (N-linked (GlcNAc...) asparagine). A Phosphoserine modification is found at serine 176.

This sequence belongs to the somatotropin/prolactin family. In terms of tissue distribution, expressed in the placenta.

It localises to the secreted. Its function is as follows. Plays an important role in growth control. Its major role in stimulating body growth is to stimulate the liver and other tissues to secrete IGF1. It stimulates both the differentiation and proliferation of myoblasts. It also stimulates amino acid uptake and protein synthesis in muscle and other tissues. The chain is Growth hormone variant (GH2) from Pan troglodytes (Chimpanzee).